The chain runs to 252 residues: Thiamine thiazole synthase (252 aa).

Residues Ser-35, 54-55 (EK), Gly-62, Val-126, and 152-154 (HVD) contribute to the NAD(+) site. The Fe cation site is built by Asp-154 and His-169. Met-217 provides a ligand contact to NAD(+). Arg-227 lines the glycine pocket.

The protein belongs to the THI4 family. Homooctamer; tetramer of dimers. Requires Fe(2+) as cofactor.

The enzyme catalyses hydrogen sulfide + glycine + NAD(+) = ADP-5-ethyl-4-methylthiazole-2-carboxylate + nicotinamide + 3 H2O + H(+). Its pathway is cofactor biosynthesis; thiamine diphosphate biosynthesis. Involved in the biosynthesis of the thiazole moiety of thiamine. Catalyzes the conversion of NAD and glycine to adenosine diphosphate 5-(2-hydroxyethyl)-4-methylthiazole-2-carboxylate (ADT), an adenylated thiazole intermediate, using free sulfide as a source of sulfur. The chain is Thiamine thiazole synthase from Pyrococcus abyssi (strain GE5 / Orsay).